Reading from the N-terminus, the 258-residue chain is Tryptophan synthase alpha chain (258 aa).

Catalysis depends on proton acceptor residues glutamate 47 and aspartate 58.

This sequence belongs to the TrpA family. As to quaternary structure, tetramer of two alpha and two beta chains.

It catalyses the reaction (1S,2R)-1-C-(indol-3-yl)glycerol 3-phosphate + L-serine = D-glyceraldehyde 3-phosphate + L-tryptophan + H2O. The protein operates within amino-acid biosynthesis; L-tryptophan biosynthesis; L-tryptophan from chorismate: step 5/5. The alpha subunit is responsible for the aldol cleavage of indoleglycerol phosphate to indole and glyceraldehyde 3-phosphate. This Bacillus thuringiensis (strain Al Hakam) protein is Tryptophan synthase alpha chain.